A 331-amino-acid polypeptide reads, in one-letter code: D-alanine--D-alanine ligase (331 aa).

An ATP-grasp domain is found at Lys-122–Glu-328. Position 152-207 (Ala-152–Glu-207) interacts with ATP. Positions 282, 295, and 297 each coordinate Mg(2+).

The protein belongs to the D-alanine--D-alanine ligase family. Requires Mg(2+) as cofactor. The cofactor is Mn(2+).

The protein localises to the cytoplasm. It carries out the reaction 2 D-alanine + ATP = D-alanyl-D-alanine + ADP + phosphate + H(+). Its pathway is cell wall biogenesis; peptidoglycan biosynthesis. Cell wall formation. This chain is D-alanine--D-alanine ligase, found in Vibrio vulnificus (strain CMCP6).